Here is a 396-residue protein sequence, read N- to C-terminus: Cyclic GMP-AMP synthase-like receptor (396 aa).

ATP is bound by residues S63 and 75–77 (EFD). Mg(2+)-binding residues include E75, D77, and D194. Position 194 (D194) interacts with GTP. ATP contacts are provided by residues 241–244 (QEQE), K262, and 275–279 (SYYLK). Mn(2+)-binding residues include V286, E287, and D292. A disordered region spans residues 376–396 (IMNGGNPQQSANAENGSCLSM). The span at 380–396 (GNPQQSANAENGSCLSM) shows a compositional bias: polar residues.

The protein belongs to the mab-21 family. Requires Mg(2+) as cofactor. It depends on Mn(2+) as a cofactor.

It carries out the reaction GTP + ATP = 2',3'-cGAMP + 2 diphosphate. The catalysed reaction is GTP + ATP = pppGp(2'-5')A + diphosphate. The enzyme catalyses pppGp(2'-5')A = 2',3'-cGAMP + diphosphate. Nucleotidyltransferase that catalyzes the formation of cyclic GMP-AMP (2',3'-cGAMP) from ATP and GTP and plays a key role in innate immunity. Acts as a key sensor of double-stranded RNA (dsRNA), the presence of dsRNA in the cytoplasm being a danger signal that triggers the immune responses. Directly binds dsRNA, activating the nucleotidyltransferase activity, leading to synthesis of 2',3'-cGAMP, a second messenger that binds to and activates Sting, thereby triggering the immune response via activation of the NF-kappa-B transcription factor. In Aethina tumida (Small hive beetle), this protein is Cyclic GMP-AMP synthase-like receptor.